The following is a 118-amino-acid chain: V-type proton ATPase subunit G 3 (118 aa).

Residues 3–54 (SQSQGIQQLLQAEKRAKDKLEEAKKRKNKRLRQAKEEATADIDQYRLKREAD) adopt a coiled-coil conformation. Positions 19 to 39 (KDKLEEAKKRKNKRLRQAKEE) are disordered.

Belongs to the V-ATPase G subunit family. In terms of assembly, V-ATPase is a heteromultimeric enzyme made up of two complexes: the ATP-hydrolytic V1 complex and the proton translocation V0 complex. The V1 complex consists of three catalytic AB heterodimers that form a heterohexamer, three peripheral stalks each consisting of EG heterodimers, one central rotor including subunits D and F, and the regulatory subunits C and H. The proton translocation complex V0 consists of the proton transport subunit a, a ring of proteolipid subunits c9c'', rotary subunit d, subunits e and f, and two accessory subunits.

Functionally, subunit of the V1 complex of vacuolar(H+)-ATPase (V-ATPase), a multisubunit enzyme composed of a peripheral complex (V1) that hydrolyzes ATP and a membrane integral complex (V0) that translocates protons. V-ATPase is responsible for acidifying and maintaining the pH of intracellular compartments and in some cell types, is targeted to the plasma membrane, where it is responsible for acidifying the extracellular environment. The protein is V-type proton ATPase subunit G 3 (atp6v1g3) of Xenopus laevis (African clawed frog).